The sequence spans 704 residues: Capsule polysaccharide modification protein LipA (704 aa).

Its subcellular location is the cell inner membrane. Functionally, involved in the phospholipid modification of the capsular polysaccharide, a strong requirement for its translocation to the cell surface. In Neisseria meningitidis serogroup A / serotype 4A (strain DSM 15465 / Z2491), this protein is Capsule polysaccharide modification protein LipA (lipA).